Reading from the N-terminus, the 157-residue chain is Small ribosomal subunit protein bS16 (157 aa).

The segment at 114 to 157 (NEGPTAEAITEKKKKAKEEAAAKAAAEAEAAAKAEEAPAEEAAE) is disordered.

This sequence belongs to the bacterial ribosomal protein bS16 family.

This chain is Small ribosomal subunit protein bS16, found in Corynebacterium diphtheriae (strain ATCC 700971 / NCTC 13129 / Biotype gravis).